The chain runs to 979 residues: Zinc finger BED domain-containing protein 6 (979 aa).

Residues 1 to 89 are required for nucleolar localization; that stretch reads MSVCTLSVPV…ILAKKFSKDL (89 aa). Residues 130 to 187 form a BED-type 1 zinc finger; the sequence is AKTSIVWHFFHVDPQYTWRAICNLCEKSVSRGKPGSHLGTSTLQRHLQARHSPHWTRA. Residues Cys-151, Cys-154, His-175, and His-180 each contribute to the Zn(2+) site. The interval 207-232 is disordered; it reads PSSGSNGSFEYIPTDPLDDNRMGKKH. Residues 264–321 form a BED-type 2 zinc finger; sequence AKTSAVWNFFYTDPQHISRAVCNICKRSVSRGRPGSHLGTSTLQRHLQATHPIHWAVA. Residues Cys-285, Cys-288, His-309, and His-314 each contribute to the Zn(2+) site. Positions 333 to 383 are disordered; the sequence is DEAETERSDLLSDTLHGEKSTGSQDLTAEDLSDSDSDEPMLEVENRSESPI. The span at 337–351 shows a compositional bias: basic and acidic residues; sequence TERSDLLSDTLHGEK. A compositionally biased stretch (acidic residues) spans 359 to 373; the sequence is TAEDLSDSDSDEPML. Ser-381 carries the phosphoserine modification. The tract at residues 866-948 is HATC (Hobo-Ac-Tam3) domain; that stretch reads VVDEYFKEKY…EQLMFLKMNL (83 aa).

In terms of tissue distribution, expressed in pancreatic islet cells (at protein level).

It is found in the nucleus. Its subcellular location is the nucleolus. The protein localises to the cytoplasm. In terms of biological role, transcriptional repressor which binds to the consensus sequence 5'-GCTCGC-3', transcription regulation may be tissue-specific. Regulates the expression of target genes such as: IGF2, PGAP6/TMEM8, ENHO, and PIANP. Acts as a transcriptional repressor of growth factor IGF2, thereby negatively regulating postnatal growth of muscles and internal organs, especially in females. Negatively regulates myoblast differentiation and myoblast mitochondrial activity via its regulation of IGF2 transcription. Negatively regulates the cell cycle of myoblasts, potentially via transcriptional regulation of the E2F family of transcription factors such as: E2F1 and E2F2. Positively regulates the cell cycle and survival of pancreatic beta cells. Binds to the CDH2 gene and may directly repress CDH2 transcription. Probably by controlling CDH2 expression, regulates pancreatic beta cell adhesion, and formation of cell-to-cell junctions between pancreatic beta cells and neural crest stem cells. May also play a role in embryonic beta cell differentiation. May play a role in insulin sensitivity and glucose clearance. The protein is Zinc finger BED domain-containing protein 6 of Homo sapiens (Human).